Here is a 372-residue protein sequence, read N- to C-terminus: Ligninase C (372 aa).

Positions 1-26 are cleaved as a signal peptide; that stretch reads MAFKSLLSFVSVIGALQGANAALTRR. His-74 (proton acceptor) is an active-site residue. Ca(2+)-binding residues include Asp-75, Gly-93, Asp-95, and Ser-97. Asn-129 is a glycosylation site (N-linked (GlcNAc...) asparagine). A heme b-binding site is contributed by His-205. The Ca(2+) site is built by Thr-206, Asp-223, Thr-225, Leu-228, and Asp-230. Positions 346–372 are disordered; sequence TPFPTFPTDPGPKTAVAPVPKPPAARK.

This sequence belongs to the peroxidase family. Ligninase subfamily. Requires Ca(2+) as cofactor. The cofactor is heme b.

It catalyses the reaction 1-(3,4-dimethoxyphenyl)-2-(2-methoxyphenoxy)propane-1,3-diol + H2O2 = 3,4-dimethoxybenzaldehyde + guaiacol + glycolaldehyde + H2O. The enzyme catalyses 2 (3,4-dimethoxyphenyl)methanol + H2O2 = 2 (3,4-dimethoxyphenyl)methanol radical + 2 H2O. The protein operates within secondary metabolite metabolism; lignin degradation. Depolymerization of lignin. Catalyzes the C(alpha)-C(beta) cleavage of the propyl side chains of lignin. The polypeptide is Ligninase C (Trametes versicolor (White-rot fungus)).